The following is a 503-amino-acid chain: Legumin J (503 aa).

Residues 1-22 (MSKPFLSLLSLSLLLFASACLA) form the signal peptide. Intrachain disulfides connect Cys33–Cys66 and Cys109–Cys329. In terms of domain architecture, Cupin type-1 1 spans 38–257 (INALEPDHRV…TFNTEEDTAK (220 aa)). Disordered stretches follow at residues 111 to 140 (ETYE…RRFR), 185 to 235 (FYLG…EGNS), and 253 to 323 (EDTA…RKNG). Residues 118-129 (SSQSRQESRQQQ) show a composition bias toward low complexity. Basic and acidic residues-rich tracts occupy residues 254 to 268 (DTAK…ERSQ) and 282 to 300 (KGKE…HREE). Acidic residues predominate over residues 301–312 (KEEEEEEEEDEE). Over residues 313–323 (EKQRSEERKNG) the composition is skewed to basic and acidic residues. One can recognise a Cupin type-1 2 domain in the interval 335 to 482 (ENIADAARAD…AFGLRQRQVT (148 aa)).

It belongs to the 11S seed storage protein (globulins) family. As to quaternary structure, hexamer; each subunit is composed of an acidic and a basic chain derived from a single precursor and linked by a disulfide bond.

This protein found in the seeds of many leguminous and non-leguminous plants is the source of sulfur-containing amino acids in seed meals. In Pisum sativum (Garden pea), this protein is Legumin J (LEGJ).